Reading from the N-terminus, the 510-residue chain is Bifunctional purine biosynthesis protein PurH (510 aa).

Positions 1–142 (MRALLSVSDK…KNYKDVMVLC (142 aa)) constitute an MGS-like domain.

The protein belongs to the PurH family.

The catalysed reaction is (6R)-10-formyltetrahydrofolate + 5-amino-1-(5-phospho-beta-D-ribosyl)imidazole-4-carboxamide = 5-formamido-1-(5-phospho-D-ribosyl)imidazole-4-carboxamide + (6S)-5,6,7,8-tetrahydrofolate. It catalyses the reaction IMP + H2O = 5-formamido-1-(5-phospho-D-ribosyl)imidazole-4-carboxamide. Its pathway is purine metabolism; IMP biosynthesis via de novo pathway; 5-formamido-1-(5-phospho-D-ribosyl)imidazole-4-carboxamide from 5-amino-1-(5-phospho-D-ribosyl)imidazole-4-carboxamide (10-formyl THF route): step 1/1. The protein operates within purine metabolism; IMP biosynthesis via de novo pathway; IMP from 5-formamido-1-(5-phospho-D-ribosyl)imidazole-4-carboxamide: step 1/1. This chain is Bifunctional purine biosynthesis protein PurH, found in Campylobacter jejuni (strain RM1221).